Reading from the N-terminus, the 360-residue chain is Phospho-N-acetylmuramoyl-pentapeptide-transferase (360 aa).

10 helical membrane-spanning segments follow: residues 26–46 (AILS…IMIK), 70–90 (GTPT…ILLW), 94–114 (SNPY…IGFV), 132–152 (WKYF…YAYG), 168–188 (IMPQ…VGTS), 199–219 (GLAI…AWAT), 236–256 (ASEL…FLWF), 263–283 (VFMG…IAVL), 288–308 (LILV…ILQV), and 338–358 (VIVR…ATLK).

Belongs to the glycosyltransferase 4 family. MraY subfamily. Mg(2+) is required as a cofactor.

It localises to the cell inner membrane. The enzyme catalyses UDP-N-acetyl-alpha-D-muramoyl-L-alanyl-gamma-D-glutamyl-meso-2,6-diaminopimeloyl-D-alanyl-D-alanine + di-trans,octa-cis-undecaprenyl phosphate = di-trans,octa-cis-undecaprenyl diphospho-N-acetyl-alpha-D-muramoyl-L-alanyl-D-glutamyl-meso-2,6-diaminopimeloyl-D-alanyl-D-alanine + UMP. Its pathway is cell wall biogenesis; peptidoglycan biosynthesis. Functionally, catalyzes the initial step of the lipid cycle reactions in the biosynthesis of the cell wall peptidoglycan: transfers peptidoglycan precursor phospho-MurNAc-pentapeptide from UDP-MurNAc-pentapeptide onto the lipid carrier undecaprenyl phosphate, yielding undecaprenyl-pyrophosphoryl-MurNAc-pentapeptide, known as lipid I. The sequence is that of Phospho-N-acetylmuramoyl-pentapeptide-transferase from Vibrio campbellii (strain ATCC BAA-1116).